A 475-amino-acid chain; its full sequence is ATP synthase subunit beta 1 (475 aa).

153–160 (GGAGVGKT) contributes to the ATP binding site.

This sequence belongs to the ATPase alpha/beta chains family. In terms of assembly, F-type ATPases have 2 components, CF(1) - the catalytic core - and CF(0) - the membrane proton channel. CF(1) has five subunits: alpha(3), beta(3), gamma(1), delta(1), epsilon(1). CF(0) has three main subunits: a(1), b(2) and c(9-12). The alpha and beta chains form an alternating ring which encloses part of the gamma chain. CF(1) is attached to CF(0) by a central stalk formed by the gamma and epsilon chains, while a peripheral stalk is formed by the delta and b chains.

The protein resides in the cell membrane. The catalysed reaction is ATP + H2O + 4 H(+)(in) = ADP + phosphate + 5 H(+)(out). Functionally, produces ATP from ADP in the presence of a proton gradient across the membrane. The catalytic sites are hosted primarily by the beta subunits. This chain is ATP synthase subunit beta 1, found in Mycoplasmopsis pulmonis (strain UAB CTIP) (Mycoplasma pulmonis).